The primary structure comprises 239 residues: Small ribosomal subunit protein uS3c (239 aa).

The 97-residue stretch at 43–139 (IKNYIQKNRK…RLNISIEKVK (97 aa)) folds into the KH type-2 domain. Residues 50-80 (NRKKGSNRKIESDSSSEVITHNRKTDSGSSS) form a disordered region.

The protein belongs to the universal ribosomal protein uS3 family. Part of the 30S ribosomal subunit.

Its subcellular location is the plastid. The protein resides in the chloroplast. The sequence is that of Small ribosomal subunit protein uS3c (rps3) from Agrostis stolonifera (Creeping bentgrass).